The chain runs to 156 residues: MSSNKINKKSIARIAAVQAIYQNILQNNDDMDDIMQNVLSFYQNNNSITDLPENLKISLSISHFKMLVKSVFENIHKLDEIIDNHLTNDKDPAHMPILLRALLRVSICELLFCPTTPAKVVINEYTDIANDMLNEHEIGFVNSVLDKIAKEHIRLI.

It belongs to the NusB family.

Functionally, involved in transcription antitermination. Required for transcription of ribosomal RNA (rRNA) genes. Binds specifically to the boxA antiterminator sequence of the ribosomal RNA (rrn) operons. The polypeptide is Transcription antitermination protein NusB (Rickettsia africae (strain ESF-5)).